A 103-amino-acid polypeptide reads, in one-letter code: Small ribosomal subunit protein uS10 (103 aa).

This sequence belongs to the universal ribosomal protein uS10 family. As to quaternary structure, part of the 30S ribosomal subunit.

Involved in the binding of tRNA to the ribosomes. The chain is Small ribosomal subunit protein uS10 from Bordetella parapertussis (strain 12822 / ATCC BAA-587 / NCTC 13253).